A 437-amino-acid polypeptide reads, in one-letter code: MRITQVTPLKEGFEIEIPNIASDKSISHRSAIFSLLSSSPARIHRYLQGEDTLHTLQIAQQLGLEVTKEGEGMVFTPPPSGIKEPFDVLDCGNAGTAIRLYVGLLAASKGYFVLNGDAYLRRRPMNRVVKPLQSVGAQIFGRDEGNLAPLTILGRPLAAFDYQSPIASAQVKSAMILAALQGEEASFFSEPERSRDHTERMLRGMGARIDEDQEGRLTLFPLLGKRLDPLEMTIPADPSSAFFFAVAAAIIPGARVKLQNVLLNPTRIEAFKVLESMGARLHYSITSETYETIGDIEVSHHTLQGITVSERISWLIDELPALAIAMALAQGKSRVQNAKELRVKESDRISVVVNNLRLLGVEVEEFEDGYEITGGTLQGGVTIDSHGDHRIAMSFALAGLVVPLTINDSACIDVSFPNFLEILSSIAKVIHESQTSR.

The 3-phosphoshikimate site is built by Lys24, Ser25, and Arg29. Phosphoenolpyruvate is bound at residue Lys24. Phosphoenolpyruvate is bound by residues Gly95 and Arg123. Ser168, Gln170, Asp317, and Lys344 together coordinate 3-phosphoshikimate. A phosphoenolpyruvate-binding site is contributed by Gln170. Asp317 serves as the catalytic Proton acceptor. Phosphoenolpyruvate is bound by residues Arg348 and Arg390.

Belongs to the EPSP synthase family. In terms of assembly, monomer.

The protein resides in the cytoplasm. It catalyses the reaction 3-phosphoshikimate + phosphoenolpyruvate = 5-O-(1-carboxyvinyl)-3-phosphoshikimate + phosphate. It functions in the pathway metabolic intermediate biosynthesis; chorismate biosynthesis; chorismate from D-erythrose 4-phosphate and phosphoenolpyruvate: step 6/7. In terms of biological role, catalyzes the transfer of the enolpyruvyl moiety of phosphoenolpyruvate (PEP) to the 5-hydroxyl of shikimate-3-phosphate (S3P) to produce enolpyruvyl shikimate-3-phosphate and inorganic phosphate. This is 3-phosphoshikimate 1-carboxyvinyltransferase from Wolinella succinogenes (strain ATCC 29543 / DSM 1740 / CCUG 13145 / JCM 31913 / LMG 7466 / NCTC 11488 / FDC 602W) (Vibrio succinogenes).